Reading from the N-terminus, the 172-residue chain is MMKFKKCLLPVAMLASFTLAGCQSNADDHAADVYQTDQLNTKQETKTVNIISILPAKVAVDNSQNKRNAQAFGALIGAVAGGVIGHNVGSGSNSGTTAGAVGGGAVGAAAGSMVNDKTLVEGVSLTYKEGTKVYTSTQVGKECQFTTGLAVVITTTYNETRIQPNTKCPEKS.

Positions 1 to 21 are cleaved as a signal peptide; that stretch reads MMKFKKCLLPVAMLASFTLAG. Cys-22 carries N-palmitoyl cysteine lipidation. A lipid anchor (S-diacylglycerol cysteine) is attached at Cys-22.

The protein resides in the cell membrane. This is an uncharacterized protein from Escherichia coli O157:H7.